A 227-amino-acid chain; its full sequence is MAERSNSEEVKLLGMWASPFSRRIEIALTLKGVSYEFLEQDITNKSSLLLQLNPVHKMIPVLVHNGKPISESLVILEYIDETWRDNPILPQDPYERTMARFWSKFVDEQIYVTAMKVVGKTGKERDAVVEATRDLLMFLEKELVGKDFLGGKSLGFVDIVATLVAFWLMRTEEIVGVKVVPVEKFPEIHRWVKNLLGNDVIKKCIPPEDEHLKYIRARMEKLNIKSA.

The region spanning 8 to 87 (EEVKLLGMWA…YIDETWRDNP (80 aa)) is the GST N-terminal domain. Glutathione is bound by residues 18-19 (SP), 44-45 (NK), 58-59 (MI), and 71-72 (ES). The GST C-terminal domain occupies 92–215 (DPYERTMARF…PPEDEHLKYI (124 aa)).

It belongs to the GST superfamily. Tau family.

It localises to the cytoplasm. Its subcellular location is the cytosol. The enzyme catalyses RX + glutathione = an S-substituted glutathione + a halide anion + H(+). In terms of biological role, may be involved in the conjugation of reduced glutathione to a wide number of exogenous and endogenous hydrophobic electrophiles and have a detoxification role against certain herbicides. This Arabidopsis thaliana (Mouse-ear cress) protein is Glutathione S-transferase U7 (GSTU7).